Consider the following 166-residue polypeptide: Ribosome maturation factor RimM (166 aa).

The 70-residue stretch at 95 to 164 (EEEYYAYELV…KKIIVKEELL (70 aa)) folds into the PRC barrel domain.

It belongs to the RimM family. In terms of assembly, binds ribosomal protein uS19.

It is found in the cytoplasm. An accessory protein needed during the final step in the assembly of 30S ribosomal subunit, possibly for assembly of the head region. Essential for efficient processing of 16S rRNA. May be needed both before and after RbfA during the maturation of 16S rRNA. It has affinity for free ribosomal 30S subunits but not for 70S ribosomes. The polypeptide is Ribosome maturation factor RimM (Aquifex aeolicus (strain VF5)).